The sequence spans 535 residues: CTP synthase (535 aa).

The amidoligase domain stretch occupies residues 1 to 267 (MTKFIFVTGG…DDIVIKRLDL (267 aa)). Position 13 (S13) interacts with CTP. S13 is a UTP binding site. 14-19 (SLGKGI) lines the ATP pocket. Y54 lines the L-glutamine pocket. D71 is a binding site for ATP. 2 residues coordinate Mg(2+): D71 and E141. CTP is bound by residues 148 to 150 (DIE), 188 to 193 (KTKPTQ), and K224. UTP-binding positions include 188-193 (KTKPTQ) and K224. An ATP-binding site is contributed by 240 to 242 (RDA). Residues 293–535 (TIGLVGKYVS…VEAAYKHQNK (243 aa)) form the Glutamine amidotransferase type-1 domain. An L-glutamine-binding site is contributed by G355. C382 functions as the Nucleophile; for glutamine hydrolysis in the catalytic mechanism. Residues 383 to 386 (LGMQ), E406, and R463 contribute to the L-glutamine site. Active-site residues include H508 and E510.

The protein belongs to the CTP synthase family. As to quaternary structure, homotetramer.

The enzyme catalyses UTP + L-glutamine + ATP + H2O = CTP + L-glutamate + ADP + phosphate + 2 H(+). It catalyses the reaction L-glutamine + H2O = L-glutamate + NH4(+). It carries out the reaction UTP + NH4(+) + ATP = CTP + ADP + phosphate + 2 H(+). The protein operates within pyrimidine metabolism; CTP biosynthesis via de novo pathway; CTP from UDP: step 2/2. With respect to regulation, allosterically activated by GTP, when glutamine is the substrate; GTP has no effect on the reaction when ammonia is the substrate. The allosteric effector GTP functions by stabilizing the protein conformation that binds the tetrahedral intermediate(s) formed during glutamine hydrolysis. Inhibited by the product CTP, via allosteric rather than competitive inhibition. Its function is as follows. Catalyzes the ATP-dependent amination of UTP to CTP with either L-glutamine or ammonia as the source of nitrogen. Regulates intracellular CTP levels through interactions with the four ribonucleotide triphosphates. The chain is CTP synthase from Staphylococcus haemolyticus (strain JCSC1435).